The primary structure comprises 176 residues: Glyoxalase domain-containing protein RDO1 (176 aa).

Positions 53–172 (SLDHLVITCH…DNNLIELSSY (120 aa)) constitute a VOC domain. E168 acts as the Proton donor/acceptor in catalysis.

The protein belongs to the glyoxalase I family.

It participates in secondary metabolite biosynthesis. Functionally, glyoxalase domain-containing protein; part of the gene cluster that mediates the biosynthesis of itaconic acid and 2-hydroxyparaconate. Cis-aconitate is secreted by the mitochondrial tricarboxylate transporter MTT1. In the cytosol cis-aconitate is converted into trans-aconitate via isomerization by the aconitate-delta-isomerase ADI1. Decarboxylation of trans-aconitate by the trans-aconitate decarboxylase TAD1 then leads then to the production of itaconic acid. The cytochrome P450 monooxygenase CYP3 further converts itaconate to 2-hydroxyparaconate via oxidation of the double bond, leading to a transient epoxide, which can subsequently be lactonized to produce 2-hydroxyparaconate. Secretion of itaconate and possibly 2-hydroxyparaconate into the medium is mediated by the major facilitator ITP1. The glyoxalase domain-containing protein RDO1 is not involved in the biosynthesis of itaconate and 2-hydroxyparaconate, however, it might play a role in the further conversion of 2-hydroxyparaconate to itatartarate. In Mycosarcoma maydis (Corn smut fungus), this protein is Glyoxalase domain-containing protein RDO1.